The sequence spans 325 residues: DNA-directed RNA polymerase subunit alpha (325 aa).

The tract at residues 1 to 238 (MSLKSLLKGF…EHLTVFINFE (238 aa)) is alpha N-terminal domain (alpha-NTD). The alpha C-terminal domain (alpha-CTD) stretch occupies residues 254-325 (KLKASLSKHV…LGLSFGMRDF (72 aa)).

Belongs to the RNA polymerase alpha chain family. In terms of assembly, homodimer. The RNAP catalytic core consists of 2 alpha, 1 beta, 1 beta' and 1 omega subunit. When a sigma factor is associated with the core the holoenzyme is formed, which can initiate transcription.

It catalyses the reaction RNA(n) + a ribonucleoside 5'-triphosphate = RNA(n+1) + diphosphate. Its function is as follows. DNA-dependent RNA polymerase catalyzes the transcription of DNA into RNA using the four ribonucleoside triphosphates as substrates. This Leptospira borgpetersenii serovar Hardjo-bovis (strain JB197) protein is DNA-directed RNA polymerase subunit alpha.